The following is a 963-amino-acid chain: VPS35 endosomal protein-sorting factor-like (963 aa).

Residues 43 to 112 (SKTKKVSRKG…DKDENSFVGP (70 aa)) are disordered. Over residues 51–72 (KGSTSSTSSSSSSSVIDPLSSV) the composition is skewed to low complexity. The residue at position 265 (serine 265) is a Phosphoserine. Residues 699–719 (AFVRACVAYCFITIPSLVGIF) form a helical membrane-spanning segment.

This sequence belongs to the VPS35L family. In terms of assembly, component of the heterotrimeric retriever complex formed by VPS26C, VPS29 and VPS35L. Interacts with VPS29. Interacts with COMMD1, CCDC93 and CCDC22; associates with the CCC (COMMD/CCDC22/CCDC93) complex which contains at least COMMD1 (and possibly other COMM domain-containing proteins), CCDC22 and CCDC93. Interacts with WASHC1, WASHC2A and WASHC2C. Interacts with SNX17 and SNX31.

Its subcellular location is the membrane. The protein localises to the endosome. In terms of biological role, acts as a component of the retriever complex. The retriever complex is a heterotrimeric complex related to retromer cargo-selective complex (CSC) and essential for retromer-independent retrieval and recycling of numerous cargos such as integrin alpha-5/beta-1 (ITGA5:ITGB1). The recruitment of the retriever complex to the endosomal membrane involves CCC and WASH complexes. In the endosomes, drives the retrieval and recycling of NxxY-motif-containing cargo proteins by coupling to SNX17, a cargo essential for the homeostatic maintenance of numerous cell surface proteins associated with processes that include cell migration, cell adhesion, nutrient supply and cell signaling. Involved in copper-dependent ATP7A trafficking between the trans-Golgi network and vesicles in the cell periphery; the function is proposed to depend on its association with the CCC complex and cooperation with the WASH complex on early endosomes. Seems not to be required for CCC complex stability. The protein is VPS35 endosomal protein-sorting factor-like of Mus musculus (Mouse).